The primary structure comprises 386 residues: IgA receptor (386 aa).

An N-terminal signal peptide occupies residues 1–41; that stretch reads MARKDTNKQYSLRKLKTGTASVAVAVAVLGAGFANQTEVKA. Positions 42–152 are igA-binding; the sequence is AEIKKPQADS…QKKHQQEQQQ (111 aa). 7 stretches are compositionally biased toward basic and acidic residues: residues 79 to 88, 97 to 128, 134 to 166, 174 to 201, 209 to 221, 233 to 243, and 251 to 267; these read YADDKEKDPQ, QDLRKREGQYQDKIEELEKERKEKQERQEQLE, EADKHYQEQQKKHQQEQQQLEAEKQKLAKDKQI, LSRDLEASRAAKKELEAEHQKLKEEKQI, LSRDLEASREAKK, EHQKLKEDKQI, and LSRDLEASREAKKKVEA. 2 disordered regions span residues 79-221 and 233-268; these read YADD…EAKK and EHQKLKEDKQISDASRQGLSRDLEASREAKKKVEAD. C repeat units lie at residues 158-192, 193-227, and 235-269; these read QKLAKDKQISDASRQGLSRDLEASRAAKKELEAEH, QKLKEEKQISDASRQGLSRDLEASREAKKKVEADL, and QKLKEDKQISDASRQGLSRDLEASREAKKKVEADL. 4 D repeats span residues 302-307, 308-313, 316-321, and 323-328; these read ARLEAE, AKALKE, AKQAEE, and AKLKGN. The disordered stretch occupies residues 323–360; it reads AKLKGNQTPNAKVAPQANRSRSAMTQQKRTLPSTGETA. Residues 339–359 are compositionally biased toward polar residues; it reads ANRSRSAMTQQKRTLPSTGET. Positions 353–357 match the LPXTG sorting signal motif; it reads LPSTG. The residue at position 356 (Thr-356) is a Pentaglycyl murein peptidoglycan amidated threonine. The propeptide at 357–386 is removed by sortase; that stretch reads GETANPFFTAAAATVMVSAGMLALKRKEEN.

Belongs to the M protein family.

The protein localises to the secreted. It is found in the cell wall. Functionally, binds IgA of both subclasses, and also binds polyclonal IgG weakly. This chain is IgA receptor (arp4), found in Streptococcus pyogenes.